Consider the following 946-residue polypeptide: Multiple C2 and transmembrane domain-containing protein 1 (946 aa).

2 disordered regions span residues 28 to 193 (QLGV…QKSS) and 205 to 229 (LEPAPPPAEPARRPAEPQSLQKGEE). The segment covering 31 to 43 (VGKGKGGGGGRAG) has biased composition (gly residues). Polar residues predominate over residues 87-96 (FSSSQPNLCC). Over residues 143–163 (PGGRSPDSAPSSSASSSLSSS) the composition is skewed to low complexity. Residues 169–187 (RGDRIRDEGTRRGSPEAHL) show a composition bias toward basic and acidic residues. 3 consecutive C2 domains span residues 235 to 353 (KINP…DVTL), 399 to 516 (QTQS…KLEL), and 550 to 671 (HKER…AYVL). 15 residues coordinate Ca(2+): D270, D276, D323, D325, D331, D433, D439, D486, D488, D494, D589, D595, D641, D643, and D649. The next 2 membrane-spanning stretches (helical) occupy residues 758–778 (FVLFLLVVWNFELYMIPLLLL) and 861–881 (PFLSWLAIIALCVFTAILYFI).

The protein belongs to the MCTP family. It depends on Ca(2+) as a cofactor. In terms of tissue distribution, expressed in the brain and central nervous system (at protein level). Isoform 1 and isoform 2 are expressed in the brain, kidney, liver, heart, lung, skeletal muscle, testis and spleen. Isoform 2 shows a higher expression in the brain, heart and skeletal muscle.

It is found in the cytoplasmic vesicle. The protein localises to the secretory vesicle. It localises to the synaptic vesicle membrane. Its subcellular location is the recycling endosome. The protein resides in the endoplasmic reticulum membrane. In terms of biological role, calcium sensor which is essential for the stabilization of normal baseline neurotransmitter release and for the induction and long-term maintenance of presynaptic homeostatic plasticity. Overexpression in cultured neurons significantly inhibits neuronal transferrin endocytosis, secretory vesicle retrieval, cell migration, and oxidative stress from glutamate toxicity. The sequence is that of Multiple C2 and transmembrane domain-containing protein 1 from Rattus norvegicus (Rat).